The chain runs to 65 residues: Large ribosomal subunit protein bL35 (65 aa).

The span at 1–15 shows a compositional bias: basic residues; the sequence is MPKMKTKSSAKKRFS. The tract at residues 1–21 is disordered; it reads MPKMKTKSSAKKRFSIRAGGS.

This sequence belongs to the bacterial ribosomal protein bL35 family.

The polypeptide is Large ribosomal subunit protein bL35 (Dechloromonas aromatica (strain RCB)).